A 1334-amino-acid chain; its full sequence is Adenylate cyclase type 9 (1334 aa).

Disordered stretches follow at residues methionine 1 to valine 28 and isoleucine 49 to arginine 71. The Cytoplasmic portion of the chain corresponds to methionine 1–arginine 113. A compositionally biased stretch (polar residues) spans glutamate 16–valine 28. A compositionally biased stretch (gly residues) spans glutamate 57 to leucine 69. A helical transmembrane segment spans residues tyrosine 114 to methionine 134. The Extracellular portion of the chain corresponds to arginine 135 to lysine 137. The helical transmembrane segment at glutamine 138–phenylalanine 158 threads the bilayer. Residues threonine 159–arginine 167 lie on the Cytoplasmic side of the membrane. A helical membrane pass occupies residues tyrosine 168–phenylalanine 187. The Extracellular portion of the chain corresponds to glutamine 188–aspartate 207. Residues threonine 208–tyrosine 227 form a helical membrane-spanning segment. Residues threonine 228 to proline 233 are Cytoplasmic-facing. A helical membrane pass occupies residues leucine 234–threonine 250. At serine 251 to glutamate 269 the chain is on the extracellular side. The chain crosses the membrane as a helical span at residues leucine 270 to methionine 290. Residues serine 291–serine 768 are Cytoplasmic-facing. The tract at residues glutamine 338–serine 363 is disordered. Residues lysine 348–serine 363 are compositionally biased toward basic residues. Mg(2+)-binding residues include aspartate 388, isoleucine 389, and aspartate 432. Residues aspartate 388 to threonine 393, leucine 430 to aspartate 432, and arginine 476 each bind ATP. Positions glycine 635–serine 670 are disordered. The chain crosses the membrane as a helical span at residues serine 769 to leucine 789. Topologically, residues lysine 790–proline 800 are extracellular. The chain crosses the membrane as a helical span at residues alanine 801 to valine 821. The Cytoplasmic segment spans residues arginine 822–phenylalanine 849. A helical membrane pass occupies residues leucine 850–phenylalanine 870. Topologically, residues glutamate 871–asparagine 873 are extracellular. Residues isoleucine 874 to phenylalanine 894 traverse the membrane as a helical segment. The Cytoplasmic portion of the chain corresponds to cysteine 895–arginine 902. Residues serine 903 to proline 923 traverse the membrane as a helical segment. Residues aspartate 924–alanine 957 are Extracellular-facing. Asparagine 937 and asparagine 946 each carry an N-linked (GlcNAc...) asparagine glycan. The helical transmembrane segment at aspartate 958 to leucine 978 threads the bilayer. Residues asparagine 979–valine 1334 lie on the Cytoplasmic side of the membrane. Residues lysine 1090, aspartate 1167–tryptophan 1169, asparagine 1174–arginine 1178, and lysine 1214 contribute to the ATP site. The disordered stretch occupies residues serine 1266 to cysteine 1303. 2 stretches are compositionally biased toward basic and acidic residues: residues lysine 1272–aspartate 1284 and leucine 1292–cysteine 1303.

Belongs to the adenylyl cyclase class-4/guanylyl cyclase family. Requires Mg(2+) as cofactor. It depends on Mn(2+) as a cofactor. Detected in embryonic heart (at protein level).

It localises to the cell membrane. The protein resides in the membrane. The catalysed reaction is ATP = 3',5'-cyclic AMP + diphosphate. With respect to regulation, insensitive to calcium/calmodulin, forskolin and somatostatin. Stimulated by beta-adrenergic receptor activation. Activity is down-regulated by calcium/calcineurin. Adenylyl cyclase that catalyzes the formation of the signaling molecule cAMP in response to activation of G protein-coupled receptors. In Gallus gallus (Chicken), this protein is Adenylate cyclase type 9 (ADCY9).